The chain runs to 208 residues: Thymidylate kinase (208 aa).

An ATP-binding site is contributed by 7-14 (GIDGAGKT).

This sequence belongs to the thymidylate kinase family.

The catalysed reaction is dTMP + ATP = dTDP + ADP. Functionally, phosphorylation of dTMP to form dTDP in both de novo and salvage pathways of dTTP synthesis. This Xylella fastidiosa (strain Temecula1 / ATCC 700964) protein is Thymidylate kinase.